The primary structure comprises 264 residues: uncharacterized protein (264 aa).

Residues His5, His7, Glu93, His134, His158, and Asp208 each contribute to the a divalent metal cation site.

Belongs to the metallo-dependent hydrolases superfamily. TatD-type hydrolase family. Requires a divalent metal cation as cofactor.

This is an uncharacterized protein from Mycobacterium tuberculosis (strain ATCC 25618 / H37Rv).